We begin with the raw amino-acid sequence, 299 residues long: Homoserine O-acetyltransferase (299 aa).

The active-site Acyl-thioester intermediate is the Cys142. Substrate-binding residues include Lys163 and Ser192. His235 functions as the Proton acceptor in the catalytic mechanism. Residue Glu237 is part of the active site. Position 249 (Arg249) interacts with substrate.

The protein belongs to the MetA family.

The protein resides in the cytoplasm. It catalyses the reaction L-homoserine + acetyl-CoA = O-acetyl-L-homoserine + CoA. It functions in the pathway amino-acid biosynthesis; L-methionine biosynthesis via de novo pathway; O-acetyl-L-homoserine from L-homoserine: step 1/1. Functionally, transfers an acetyl group from acetyl-CoA to L-homoserine, forming acetyl-L-homoserine. The protein is Homoserine O-acetyltransferase of Synechococcus sp. (strain ATCC 27144 / PCC 6301 / SAUG 1402/1) (Anacystis nidulans).